The sequence spans 251 residues: Long tail fiber protein Gp37 (251 aa).

The interval 134 to 137 is interaction with the receptor-recognizing protein gp38; that stretch reads DVYI. The Peptidase S74 domain maps to 139-237; the sequence is SDGRLKINKK…EEIKELKTPL (99 aa).

Belongs to the S16-like long tail fiber protein Gp37 family. In terms of assembly, homotrimer. Interacts with the receptor-recognizing protein Gp38. Post-translationally, proteolytic cleavage and release of the chaperone in the host cytosol stabilizes the folded protein.

It localises to the virion. Functionally, constitues the trimeric tip of the long tail fiber that mediates the attachment to the host receptor, together with the receptor-recognizing protein Gp38. The C-terminal chaperone protein mediates homotrimerization and proper folding of the catalytic trimer. In Selenomonas ruminantium (Bacteriophage M1), this protein is Long tail fiber protein Gp37 (37).